The primary structure comprises 563 residues: BOS complex subunit NCLN (563 aa).

The signal sequence occupies residues 1-42; the sequence is MLEEAGEVLENVLKASCLPLGFIVFLPAVLLLVAPPLPAADA. Residues 43–522 are Lumenal-facing; the sequence is AHEFTVYRMQ…VMNAYRVKPA (480 aa). N-linked (GlcNAc...) asparagine glycosylation is found at N241 and N428. Residues 523 to 543 form a helical membrane-spanning segment; sequence IFDLLLALCIGAYLGMAYTAV. Over 544-563 the chain is Cytoplasmic; it reads QHFHVLYKTVQRLLLKAKAQ.

This sequence belongs to the nicastrin family. In terms of assembly, component of the back of Sec61 (BOS) complex, composed of NCLN/Nicalin, NOMO1 and TMEM147. The BOS complex is part of the multi-pass translocon (MPT) complex, composed of three subcomplexes, the GEL complex (composed of RAB5IF/OPTI and TMCO1), the BOS complex (composed of NCLN/Nicalin, NOMO1 and TMEM147) and the PAT complex (composed of WDR83OS/Asterix and CCDC47). The MPT complex associates with the SEC61 complex.

The protein resides in the endoplasmic reticulum membrane. Functionally, component of the multi-pass translocon (MPT) complex that mediates insertion of multi-pass membrane proteins into the lipid bilayer of membranes. The MPT complex takes over after the SEC61 complex: following membrane insertion of the first few transmembrane segments of proteins by the SEC61 complex, the MPT complex occludes the lateral gate of the SEC61 complex to promote insertion of subsequent transmembrane regions. May antagonize Nodal signaling and subsequent organization of axial structures during mesodermal patterning, via its interaction with NOMO. This Mus musculus (Mouse) protein is BOS complex subunit NCLN (Ncln).